The primary structure comprises 214 residues: Endothelial cell-specific chemotaxis regulator (214 aa).

Residues 1 to 18 (MRLGSAILGLLLLQGYSS) form the signal peptide. Residues 19 to 130 (QPTTTQTSQE…PTPTSESVLT (112 aa)) are Extracellular-facing. Positions 23-107 (TQTSQEILQK…DATPSPETTS (85 aa)) are disordered. Polar residues predominate over residues 28-57 (EILQKSSQVSLVSNQPVTPRSSTMDKQSLS). The segment covering 80-90 (RSSSSSSSSSS) has biased composition (low complexity). The helical transmembrane segment at 131-151 (VAAFGVISFIVILVVVVIILV) threads the bilayer. The Cytoplasmic segment spans residues 152-214 (SVVSLRFKCR…KGSMSAEKIL (63 aa)). The interval 163 to 184 (NKESEDPQKPGSSGLSESCSTA) is disordered. Over residues 172-184 (PGSSGLSESCSTA) the composition is skewed to polar residues. Residues serine 204 and serine 207 each carry the phosphoserine modification.

This sequence belongs to the ECSCR family. In terms of assembly, interacts with FLNA. Interacts with the 20S proteasome subunit PSMA7. In terms of processing, may be heavily O-glycosylated. Expressed in all tissues examined, highest expression was observed in lung and spleen endothelial cells.

It is found in the cell membrane. Its subcellular location is the cytoplasm. Its function is as follows. Regulates endothelial chemotaxis and tube formation. Has a role in angiogenesis and apoptosis via modulation of the actin cytoskeleton and facilitation of proteasomal degradation of the apoptosis inhibitors BIRC3/IAP1 and BIRC2/IAP2. The sequence is that of Endothelial cell-specific chemotaxis regulator (Ecscr) from Mus musculus (Mouse).